The following is a 598-amino-acid chain: Insulin-like growth factor 2 mRNA-binding protein 1 (598 aa).

RRM domains lie at 2-75 and 81-156; these read NKLY…HSVP and RKLQ…YIPD. The interval 155 to 195 is disordered; it reads PDENSEVDSQRGPDNGRRPGYGPRGTSRQMSPGSGIPSKHQ. Residues 162 to 171 are compositionally biased toward basic and acidic residues; it reads DSQRGPDNGR. S185 carries the phosphoserine modification. 2 KH domains span residues 198–263 and 279–346; these read DIPL…CRMI and EVPL…EQEI. Y399 bears the Phosphotyrosine mark. KH domains are found at residues 407–472 and 489–555; these read QETV…QGRI and KLET…QRKI. A disordered region spans residues 561–598; sequence QVKQQQKGGGMGTPQGPHPQGMTELGSPQGLAQEPRRK. 2 positions are modified to phosphothreonine: T573 and T583. Over residues 574–583 the composition is skewed to low complexity; that stretch reads PQGPHPQGMT. At S587 the chain carries Phosphoserine.

This sequence belongs to the RRM IMP/VICKZ family. In terms of assembly, component of the CRD-mediated complex.

It localises to the nucleus. The protein resides in the cytoplasm. Its subcellular location is the perinuclear region. The protein localises to the P-body. It is found in the stress granule. It localises to the cell projection. The protein resides in the growth cone. Its subcellular location is the filopodium. The protein localises to the lamellipodium. Its function is as follows. RNA-binding factor that recruits target transcripts to cytoplasmic protein-RNA complexes (mRNPs). This transcript 'caging' into mRNPs allows mRNA transport and transient storage. It also modulates the rate and location at which target transcripts encounter the translational apparatus and shields them from endonuclease attacks or microRNA-mediated degradation. Preferentially binds to N6-methyladenosine (m6A)-containing mRNAs and increases their stability. Plays a direct role in the transport and translation of transcripts required for axonal regeneration in adult sensory neurons. Regulates localized beta-actin/ACTB mRNA translation in polarized cells, a crucial process for cell migration and neurite outgrowth. Promotes the directed movement of cells by fine-tuning intracellular signaling networks and enhances the velocity of cell migration. The polypeptide is Insulin-like growth factor 2 mRNA-binding protein 1 (igf2bp1) (Danio rerio (Zebrafish)).